A 296-amino-acid chain; its full sequence is ATP synthase gamma chain (296 aa).

This sequence belongs to the ATPase gamma chain family. F-type ATPases have 2 components, CF(1) - the catalytic core - and CF(0) - the membrane proton channel. CF(1) has five subunits: alpha(3), beta(3), gamma(1), delta(1), epsilon(1). CF(0) has three main subunits: a, b and c.

The protein localises to the cell inner membrane. Produces ATP from ADP in the presence of a proton gradient across the membrane. The gamma chain is believed to be important in regulating ATPase activity and the flow of protons through the CF(0) complex. The sequence is that of ATP synthase gamma chain from Jannaschia sp. (strain CCS1).